Reading from the N-terminus, the 192-residue chain is UPF0312 protein plu2095 (192 aa).

A signal peptide spans 1–23; sequence MLKKTLLGLTAGALLLNASSALA.

Belongs to the UPF0312 family. Type 1 subfamily.

The protein resides in the periplasm. This chain is UPF0312 protein plu2095, found in Photorhabdus laumondii subsp. laumondii (strain DSM 15139 / CIP 105565 / TT01) (Photorhabdus luminescens subsp. laumondii).